The chain runs to 244 residues: Putative ABC transporter ATP-binding protein gll0289 (244 aa).

Positions 5–237 (LVVEELHYSY…RVLLETHGLE (233 aa)) constitute an ABC transporter domain. Position 38 to 45 (38 to 45 (GPNGSGKS)) interacts with ATP.

This sequence belongs to the ABC transporter superfamily.

It is found in the cell inner membrane. Functionally, probably part of an ABC transporter complex. Responsible for energy coupling to the transport system. The sequence is that of Putative ABC transporter ATP-binding protein gll0289 from Gloeobacter violaceus (strain ATCC 29082 / PCC 7421).